The primary structure comprises 58 residues: Photosystem II reaction center protein K (58 aa).

Residues 1–21 (MFDLYLKNLLDLSDSGTVVLA) constitute a propeptide that is removed on maturation. Residues 29–49 (IFDPIVDVLPVIPVFFLLLAF) form a helical membrane-spanning segment.

The protein belongs to the PsbK family. As to quaternary structure, PSII is composed of 1 copy each of membrane proteins PsbA, PsbB, PsbC, PsbD, PsbE, PsbF, PsbH, PsbI, PsbJ, PsbK, PsbL, PsbM, PsbT, PsbX, PsbY, PsbZ, Psb30/Ycf12, at least 3 peripheral proteins of the oxygen-evolving complex and a large number of cofactors. It forms dimeric complexes.

It is found in the plastid. The protein resides in the chloroplast thylakoid membrane. In terms of biological role, one of the components of the core complex of photosystem II (PSII). PSII is a light-driven water:plastoquinone oxidoreductase that uses light energy to abstract electrons from H(2)O, generating O(2) and a proton gradient subsequently used for ATP formation. It consists of a core antenna complex that captures photons, and an electron transfer chain that converts photonic excitation into a charge separation. The protein is Photosystem II reaction center protein K of Zygnema circumcarinatum (Green alga).